The chain runs to 403 residues: Na(+)-translocating NADH-quinone reductase subunit B (403 aa).

The next 9 helical transmembrane spans lie at 56-76 (MMII…YNVG), 121-141 (AYFL…EVLF), 164-184 (LPPS…VVLG), 225-245 (GFAG…NILG), 260-280 (GSMG…LLLT), 287-307 (IVAG…AIGS), 312-332 (MFAM…GMIF), 348-368 (WLFG…NPAF), and 371-391 (GMML…HFVV). Thr230 carries the FMN phosphoryl threonine modification.

The protein belongs to the NqrB/RnfD family. Composed of six subunits; NqrA, NqrB, NqrC, NqrD, NqrE and NqrF. FMN serves as cofactor.

The protein localises to the cell inner membrane. The enzyme catalyses a ubiquinone + n Na(+)(in) + NADH + H(+) = a ubiquinol + n Na(+)(out) + NAD(+). In terms of biological role, NQR complex catalyzes the reduction of ubiquinone-1 to ubiquinol by two successive reactions, coupled with the transport of Na(+) ions from the cytoplasm to the periplasm. NqrA to NqrE are probably involved in the second step, the conversion of ubisemiquinone to ubiquinol. In Pseudomonas aeruginosa (strain LESB58), this protein is Na(+)-translocating NADH-quinone reductase subunit B.